The following is a 341-amino-acid chain: Anthranilate phosphoribosyltransferase (341 aa).

5-phospho-alpha-D-ribose 1-diphosphate is bound by residues Gly-82, 85-86, Thr-90, 92-95, 110-118, and Thr-122; these read GD, NIST, and KHGNRAITS. Gly-82 is a binding site for anthranilate. Ser-94 is a binding site for Mg(2+). Asn-113 lines the anthranilate pocket. Anthranilate is bound at residue Arg-168. Mg(2+) is bound by residues Asp-226 and Glu-227.

Belongs to the anthranilate phosphoribosyltransferase family. Homodimer. Mg(2+) serves as cofactor.

The enzyme catalyses N-(5-phospho-beta-D-ribosyl)anthranilate + diphosphate = 5-phospho-alpha-D-ribose 1-diphosphate + anthranilate. Its pathway is amino-acid biosynthesis; L-tryptophan biosynthesis; L-tryptophan from chorismate: step 2/5. Catalyzes the transfer of the phosphoribosyl group of 5-phosphorylribose-1-pyrophosphate (PRPP) to anthranilate to yield N-(5'-phosphoribosyl)-anthranilate (PRA). This chain is Anthranilate phosphoribosyltransferase, found in Caulobacter vibrioides (strain ATCC 19089 / CIP 103742 / CB 15) (Caulobacter crescentus).